Reading from the N-terminus, the 479-residue chain is Sulfate adenylyltransferase subunit 1 (479 aa).

Residues 25–239 (KSLLRFLTCG…EVLETVDIQR (215 aa)) form the tr-type G domain. Residues 34–41 (GSVDDGKS) are G1. 34–41 (GSVDDGKS) contributes to the GTP binding site. Residues 92–96 (GITID) form a G2 region. The G3 stretch occupies residues 113-116 (DTPG). Residues 113 to 117 (DTPGH) and 168 to 171 (NKMD) contribute to the GTP site. Positions 168 to 171 (NKMD) are G4. Positions 206–208 (SAL) are G5.

The protein belongs to the TRAFAC class translation factor GTPase superfamily. Classic translation factor GTPase family. CysN/NodQ subfamily. In terms of assembly, heterodimer composed of CysD, the smaller subunit, and CysN.

The enzyme catalyses sulfate + ATP + H(+) = adenosine 5'-phosphosulfate + diphosphate. It functions in the pathway sulfur metabolism; hydrogen sulfide biosynthesis; sulfite from sulfate: step 1/3. Its function is as follows. With CysD forms the ATP sulfurylase (ATPS) that catalyzes the adenylation of sulfate producing adenosine 5'-phosphosulfate (APS) and diphosphate, the first enzymatic step in sulfur assimilation pathway. APS synthesis involves the formation of a high-energy phosphoric-sulfuric acid anhydride bond driven by GTP hydrolysis by CysN coupled to ATP hydrolysis by CysD. The sequence is that of Sulfate adenylyltransferase subunit 1 from Salmonella dublin (strain CT_02021853).